The primary structure comprises 162 residues: UPF0303 protein Arad_3071 (162 aa).

The protein belongs to the UPF0303 family.

In Rhizobium rhizogenes (strain K84 / ATCC BAA-868) (Agrobacterium radiobacter), this protein is UPF0303 protein Arad_3071.